The sequence spans 139 residues: uncharacterized protein (139 aa).

The tract at residues 1–26 (MQLVREKRGAHQHVPRKTTEPQKVRG) is disordered. Over residues 17-26 (KTTEPQKVRG) the composition is skewed to basic and acidic residues.

This is an uncharacterized protein from Ictalurid herpesvirus 1 (strain Auburn) (IcHV-1).